Reading from the N-terminus, the 215-residue chain is Adenylate kinase (215 aa).

10–15 contributes to the ATP binding site; that stretch reads GAGKGT. The interval 30–59 is NMP; it reads STGDMLREAVAAGTELGKKVKEIIEKGLLV. Residues Thr-31, Arg-36, 57 to 59, 85 to 88, and Gln-92 each bind AMP; these read LLV and GFPR. An LID region spans residues 126-163; that stretch reads SRRVCPSCGKVYNLLTIKPKNDMLCDDCNIGLIQREDD. Arg-127 contributes to the ATP binding site. Cys-130 and Cys-133 together coordinate Zn(2+). 136-137 provides a ligand contact to ATP; that stretch reads VY. Zn(2+) is bound by residues Cys-150 and Cys-153. 2 residues coordinate AMP: Arg-160 and Arg-171. Leu-199 contributes to the ATP binding site.

It belongs to the adenylate kinase family. In terms of assembly, monomer.

The protein resides in the cytoplasm. The enzyme catalyses AMP + ATP = 2 ADP. Its pathway is purine metabolism; AMP biosynthesis via salvage pathway; AMP from ADP: step 1/1. Functionally, catalyzes the reversible transfer of the terminal phosphate group between ATP and AMP. Plays an important role in cellular energy homeostasis and in adenine nucleotide metabolism. This chain is Adenylate kinase, found in Kosmotoga olearia (strain ATCC BAA-1733 / DSM 21960 / TBF 19.5.1).